A 1445-amino-acid polypeptide reads, in one-letter code: CD109 antigen (1445 aa).

Positions 1-21 are cleaved as a signal peptide; that stretch reads MQGPPLLTAAHLLCVCTAALA. 8 N-linked (GlcNAc...) asparagine glycosylation sites follow: Asn-68, Asn-118, Asn-247, Asn-279, Asn-365, Asn-419, Asn-513, and Asn-645. A bait region (approximate) region spans residues 593–702; it reads DKSVNLMNAS…TWIWLDTNMG (110 aa). The isoglutamyl cysteine thioester (Cys-Gln) cross-link spans 921-924; it reads CGEQ. Asn-1086 and Asn-1355 each carry an N-linked (GlcNAc...) asparagine glycan. Ala-1420 carries GPI-anchor amidated alanine lipidation. Positions 1421–1445 are cleaved as a propeptide — removed in mature form; sequence SGSHHHSSVIFIFCFKLLYFMELWL.

This sequence belongs to the protease inhibitor I39 (alpha-2-macroglobulin) family. In terms of assembly, heterodimer; disulfide-linked. Interacts with TGFB1 and TGFBR1. Forms a heteromeric complex with TGFBR1, TGFBR2 and TGFBR3 in a ligand-independent manner. In terms of processing, N-glycosylated. Post-translationally, 2 forms of 150 (p150) and 120 kDa (p120) exist due to proteolytic degradation from a 180 kDa form. In terms of tissue distribution, widely expressed with high level in uterus, aorta, heart, lung, trachea, placenta and in fetal heart, kidney, liver, spleen and lung. Expressed by CD34(+) acute myeloid leukemia cell lines, T-cell lines, activated T-lymphoblasts, endothelial cells and activated platelets. Isoform 4 is expressed in placenta. Isoform 1 is expressed in keratinocytes and placenta.

The protein resides in the cell membrane. Its function is as follows. Modulates negatively TGFB1 signaling in keratinocytes. The sequence is that of CD109 antigen (CD109) from Homo sapiens (Human).